The sequence spans 182 residues: Envelope glycoprotein L (182 aa).

Positions 1 to 39 (MRRSAARGRAVSSTQTAMGAGAAIAVWAAALIALYSSCA) are cleaved as a signal peptide. The gL alphaherpesvirus-type domain maps to 52-182 (ANASDTIGRL…RPEKTAPGGV (131 aa)). Cysteine 73 and cysteine 109 are disulfide-bonded.

This sequence belongs to the herpesviridae glycoprotein L (gL) family. Alphaherpesvirinae gL subfamily. Interacts with glycoprotein H (gH); this interaction is necessary for the correct processing and cell surface expression of gH. The heterodimer gH/gL seems to interact with gB trimers during fusion. Post-translationally, O-glycosylated, and sialylated.

The protein resides in the virion membrane. The protein localises to the host cell membrane. It is found in the host Golgi apparatus. It localises to the host trans-Golgi network. The heterodimer glycoprotein H-glycoprotein L is required for the fusion of viral and plasma membranes leading to virus entry into the host cell. Acts as a functional inhibitor of gH and maintains gH in an inhibited form. Upon binding to host integrins, gL dissociates from gH leading to activation of the viral fusion glycoproteins gB and gH. This Amazona oratrix (yellow-headed parrot) protein is Envelope glycoprotein L.